The sequence spans 388 residues: MKWFGVLGLVTLSECLVTIPLVKIKSLRENLREKDMLKEYLEKYPFRLTHKLLHKHADSGVAFEPMRNYLDIAYMGIISVGTPPQEFQVIFDTGSADLWVPSIYCSSPACSNHNTFNPLRSSTFVASGQPIKLIYGTGKMSGFVGYDTIKISSLVDRNQAFGLSVEEPDKILELATFDGILGLSYPSLSVKGVTPVFDNLWNQGLLSQKLFAFYLSRKGKKGSVVMFGGVDPSYYTGELHWVPVSKPLYWQISMDSISINGKVIACDGGCQAIVDTGTSLLLGPQDAVLNIQEIIQARRSTSGEYFIDCDAVNTLPDILFTIDGIGYPVPANAYIQKDAALGICFSSFEGNEDISNNSEEWILGDVFLRLYFTVFDRENDRIGLATAV.

The first 15 residues, 1-15, serve as a signal peptide directing secretion; the sequence is MKWFGVLGLVTLSEC. The Peptidase A1 domain occupies 74 to 385; that stretch reads YMGIISVGTP…DRENDRIGLA (312 aa). The active site involves aspartate 92. 2 cysteine pairs are disulfide-bonded: cysteine 105–cysteine 110 and cysteine 266–cysteine 270. Residue aspartate 275 is part of the active site. A disulfide bridge links cysteine 309 with cysteine 344. N-linked (GlcNAc...) asparagine glycosylation occurs at asparagine 356.

Belongs to the peptidase A1 family. In terms of tissue distribution, trophoblast and placental tissue.

It is found in the secreted. It localises to the extracellular space. In Equus caballus (Horse), this protein is Pregnancy-associated glycoprotein (PAG).